The following is a 121-amino-acid chain: Urotensin-2 (121 aa).

The signal sequence occupies residues Met-1–Ala-19. The propeptide occupies Leu-20–Tyr-106. Cysteines 115 and 120 form a disulfide.

Belongs to the urotensin-2 family.

It is found in the secreted. In terms of biological role, highly potent vasoconstrictor. The sequence is that of Urotensin-2 (UTS2) from Sus scrofa (Pig).